The sequence spans 894 residues: Histone-lysine N-methyltransferase PRDM9 (894 aa).

Disordered regions lie at residues 1–23 (MSPE…RKPM) and 143–174 (SGSE…LRKK). The KRAB-related domain maps to 23–86 (MVKDAFKDIS…RRQAIKLQVD (64 aa)). Positions 143–164 (SGSEQAQKPVSPSGEASTSGQH) are enriched in polar residues. Residues cysteine 205, cysteine 208, cysteine 216, and histidine 219 each coordinate Zn(2+). The 115-residue stretch at 244-358 (PGLRIGPSGI…PGCELLVWYG (115 aa)) folds into the SET domain. Residues 256-258 (AGL), tyrosine 291, and 320-321 (NC) contribute to the S-adenosyl-L-methionine site. 288–294 (NNGYSWL) is a substrate binding site. Tyrosine 357 serves as a coordination point for substrate. The residue at position 368 (lysine 368) is an N6,N6,N6-trimethyllysine; alternate. Position 368 is an N6-methyllysine; alternate (lysine 368). An N6-methyllysine mark is found at lysine 372 and lysine 374. The C2H2-type 1 zinc-finger motif lies at 388–411 (HPCPSCCLAFSSQKFLSQHVERNH). Positions 390, 393, 406, and 411 each coordinate Zn(2+). Residues 408–469 (ERNHSSQNFP…SKLLNKRTWQ (62 aa)) form a disordered region. Basic and acidic residues predominate over residues 444 to 461 (PHSRNDKTKGQEIKERSK). The C2H2-type 2; degenerate zinc finger occupies 524-546 (VKYGECGQGFSVKSDVITHQRTH). 12 consecutive C2H2-type zinc fingers follow at residues 552–574 (YVCR…QRIH), 580–602 (YVCR…QRTH), 608–630 (YVCR…QRRH), 636–658 (YVCR…QRRH), 664–686 (YVCR…QRTH), 692–714 (YVCR…QRTH), 720–742 (YVCR…QRTH), 748–770 (YVCR…QRTH), 776–798 (YVCR…QRTH), 804–826 (YVCR…QRTH), 832–854 (YVCR…QRTH), and 860–882 (YVCR…QRTH). Residues cysteine 722, cysteine 725, histidine 738, histidine 742, cysteine 750, cysteine 753, histidine 766, histidine 770, cysteine 778, cysteine 781, histidine 794, histidine 798, cysteine 806, cysteine 809, histidine 822, and histidine 826 each coordinate Zn(2+). The segment at 730 to 820 (SNKSHLLRHQ…RGFSNKSHLL (91 aa)) is DNA-binding.

Belongs to the class V-like SAM-binding methyltransferase superfamily. As to quaternary structure, homodimer. Interacts with EHMT2 and CDYL; interaction only takes place when PRDM9 is bound to hotspot DNA. Interacts with CXXC1; this interaction does not link PRDM9-activated recombination hotspot sites with DSB machinery and is not required for the hotspot recognition pathway. Forms a complex with EWSR1, REC8, SYCP3 and SYCP1; complex formation is dependent of phosphorylated form of REC8 and requires PRDM9 bound to hotspot DNA; EWSR1 joins PRDM9 with the chromosomal axis through REC8. In terms of processing, mono-methylated; automethylated. Tri-methylated; automethylated. Mono-methylation is predominant; automethylation is lower and slower than H3 peptide methylation and is in a highest S-adenosyl-L-methionine concentration-dependent. There are two major sites for automethylation at Lys-368 and Lys-374. Lysines can be simultaneously methylated, such as Lys-368(me3)/Lys-372(me1), Lys-368(me1)/Lys-374(me1) and Lys-368(me1)/Lys-372(me1)/Lys-374(me1). Automethylation is an intramolecular (cis) process.

It is found in the nucleus. Its subcellular location is the chromosome. The catalysed reaction is L-lysyl-[protein] + S-adenosyl-L-methionine = N(6)-methyl-L-lysyl-[protein] + S-adenosyl-L-homocysteine + H(+). It catalyses the reaction N(6)-methyl-L-lysyl-[protein] + S-adenosyl-L-methionine = N(6),N(6)-dimethyl-L-lysyl-[protein] + S-adenosyl-L-homocysteine + H(+). It carries out the reaction L-lysyl(4)-[histone H3] + 3 S-adenosyl-L-methionine = N(6),N(6),N(6)-trimethyl-L-lysyl(4)-[histone H3] + 3 S-adenosyl-L-homocysteine + 3 H(+). The enzyme catalyses L-lysyl(36)-[histone H3] + 3 S-adenosyl-L-methionine = N(6),N(6),N(6)-trimethyl-L-lysyl(36)-[histone H3] + 3 S-adenosyl-L-homocysteine + 3 H(+). The catalysed reaction is L-lysyl(9)-[histone H3] + 3 S-adenosyl-L-methionine = N(6),N(6),N(6)-trimethyl-L-lysyl(9)-[histone H3] + 3 S-adenosyl-L-homocysteine + 3 H(+). It catalyses the reaction L-lysyl(20)-[histone H4] + S-adenosyl-L-methionine = N(6)-methyl-L-lysyl(20)-[histone H4] + S-adenosyl-L-homocysteine + H(+). It carries out the reaction N(6)-methyl-L-lysyl(20)-[histone H4] + S-adenosyl-L-methionine = N(6),N(6)-dimethyl-L-lysyl(20)-[histone H4] + S-adenosyl-L-homocysteine + H(+). With respect to regulation, inhibited by suramin with an IC(50) of 4.1 uM. In terms of biological role, histone methyltransferase that sequentially mono-, di-, and tri-methylates both 'Lys-4' (H3K4) and 'Lys-36' (H3K36) of histone H3 to produce respectively trimethylated 'Lys-4' (H3K4me3) and trimethylated 'Lys-36' (H3K36me3) histone H3 and plays a key role in meiotic prophase by determining hotspot localization thereby promoting meiotic recombination. Can also methylate all four core histones with H3 being the best substrate and the most highly modified. Is also able, on one hand, to mono and di-methylate H4K20 and on other hand to trimethylate H3K9 with the di-methylated H3K9 as the best substrate. During meiotic prophase, binds specific DNA sequences through its zinc finger domains thereby determining hotspot localization where it promotes local H3K4me3 and H3K36me3 enrichment on the same nucleosomes through its histone methyltransferase activity. Thereby promotes double-stranded breaks (DSB) formation, at this subset of PRDM9-binding sites, that initiates meiotic recombination for the proper meiotic progression. During meiotic progression hotspot-bound PRDM9 interacts with several complexes; in early leptonema binds CDYL and EHMT2 followed by EWSR1 and CXXC1 by the end of leptonema. EWSR1 joins PRDM9 with the chromosomal axis through REC8. In this way, controls the DSB repair pathway, pairing of homologous chromosomes and sex body formation. Moreover plays a central role in the transcriptional activation of genes during early meiotic prophase thanks to H3K4me3 and H3K36me3 enrichment that represents a specific tag for epigenetic transcriptional activation. In addition performs automethylation. Acetylation and phosphorylation of histone H3 attenuate or prevent histone H3 methylation. This is Histone-lysine N-methyltransferase PRDM9 from Homo sapiens (Human).